We begin with the raw amino-acid sequence, 128 residues long: Cytochrome c-type biogenesis protein CcmE (128 aa).

Over 1-8 (MQKRVRNR) the chain is Cytoplasmic. Residues 9–29 (LITIIICFCSAFLGIGIILYN) traverse the membrane as a helical; Signal-anchor for type II membrane protein segment. Topologically, residues 30 to 128 (LENNIVFFLP…KHDENYRPTR (99 aa)) are periplasmic. Histidine 120 and tyrosine 124 together coordinate heme.

Belongs to the CcmE/CycJ family.

Its subcellular location is the cell inner membrane. Heme chaperone required for the biogenesis of c-type cytochromes. Transiently binds heme delivered by CcmC and transfers the heme to apo-cytochromes in a process facilitated by CcmF and CcmH. In Rickettsia canadensis (strain McKiel), this protein is Cytochrome c-type biogenesis protein CcmE.